The primary structure comprises 252 residues: 3-deoxy-manno-octulosonate cytidylyltransferase (252 aa).

Belongs to the KdsB family.

Its subcellular location is the cytoplasm. It catalyses the reaction 3-deoxy-alpha-D-manno-oct-2-ulosonate + CTP = CMP-3-deoxy-beta-D-manno-octulosonate + diphosphate. The protein operates within nucleotide-sugar biosynthesis; CMP-3-deoxy-D-manno-octulosonate biosynthesis; CMP-3-deoxy-D-manno-octulosonate from 3-deoxy-D-manno-octulosonate and CTP: step 1/1. Its pathway is bacterial outer membrane biogenesis; lipopolysaccharide biosynthesis. Functionally, activates KDO (a required 8-carbon sugar) for incorporation into bacterial lipopolysaccharide in Gram-negative bacteria. This chain is 3-deoxy-manno-octulosonate cytidylyltransferase, found in Trichlorobacter lovleyi (strain ATCC BAA-1151 / DSM 17278 / SZ) (Geobacter lovleyi).